The primary structure comprises 389 residues: Na(+)/H(+) antiporter NhaA 1 (389 aa).

11 helical membrane passes run 12–32 (VLNE…ALLV), 62–82 (FLLW…GLEL), 97–117 (IVLP…LFAL), 128–148 (GWAI…MMCG), 157–177 (IFLL…IAIF), 184–204 (IAAF…NLLG), 220–240 (ISVL…AFFI), 260–280 (FWIA…VNLS), 282–302 (IDIG…LFVG), 331–351 (LYGV…IDGL), and 365–385 (LAIL…LKFF).

The protein belongs to the NhaA Na(+)/H(+) (TC 2.A.33) antiporter family.

The protein localises to the cell inner membrane. It carries out the reaction Na(+)(in) + 2 H(+)(out) = Na(+)(out) + 2 H(+)(in). Its function is as follows. Na(+)/H(+) antiporter that extrudes sodium in exchange for external protons. In Campylobacter jejuni subsp. jejuni serotype O:2 (strain ATCC 700819 / NCTC 11168), this protein is Na(+)/H(+) antiporter NhaA 1.